The chain runs to 373 residues: Pulmonary surfactant-associated protein B (373 aa).

The signal sequence occupies residues 1–22 (MAKSHLLPWLLLLPILCGPGTA). A propeptide spanning residues 23–187 (AAITYSLACA…PQTQDLSEQL (165 aa)) is cleaved from the precursor. Residues 24 to 64 (AITYSLACAQGPEFWCQSLEQALQCRALGHCLQEVWGHVEA) form the Saposin A-type domain. 3 Saposin B-type domains span residues 64-146 (ADDL…KPRH), 191-268 (PIPY…SSED), and 287-362 (QDSD…AAPF). 9 disulfides stabilise this stretch: cysteine 68–cysteine 142, cysteine 71–cysteine 136, cysteine 99–cysteine 111, cysteine 195–cysteine 264, cysteine 198–cysteine 258, cysteine 222–cysteine 233, cysteine 291–cysteine 358, cysteine 294–cysteine 352, and cysteine 317–cysteine 327. The N-linked (GlcNAc...) asparagine glycan is linked to asparagine 73. The propeptide occupies 267-373 (EDSAGPALPA…PLQCVHSPHF (107 aa)). Asparagine 303 is a glycosylation site (N-linked (GlcNAc...) asparagine).

In terms of assembly, homodimer; disulfide-linked.

It localises to the secreted. It is found in the extracellular space. Its subcellular location is the surface film. Pulmonary surfactant-associated proteins promote alveolar stability by lowering the surface tension at the air-liquid interface in the peripheral air spaces. SP-B increases the collapse pressure of palmitic acid to nearly 70 millinewtons per meter. In Bos taurus (Bovine), this protein is Pulmonary surfactant-associated protein B (SFTPB).